Here is a 206-residue protein sequence, read N- to C-terminus: Transcription antitermination protein NusB (206 aa).

Residues 135 to 206 (ARGEKTSAQE…ETQPPGVNEV (72 aa)) are disordered. The span at 169-180 (ATPATTPVTTTV) shows a compositional bias: low complexity.

Belongs to the NusB family.

Its function is as follows. Involved in transcription antitermination. Required for transcription of ribosomal RNA (rRNA) genes. Binds specifically to the boxA antiterminator sequence of the ribosomal RNA (rrn) operons. The polypeptide is Transcription antitermination protein NusB (Heliobacterium modesticaldum (strain ATCC 51547 / Ice1)).